A 563-amino-acid chain; its full sequence is Merozoite receptor PK66 (563 aa).

An N-terminal signal peptide occupies residues 1-13 (MNKIYYILFLSAQ). The Extracellular portion of the chain corresponds to 14 to 487 (CLVHMGKCER…DGKHKKKMLL (474 aa)). 6 N-linked (GlcNAc...) asparagine glycosylation sites follow: asparagine 36, asparagine 107, asparagine 176, asparagine 189, asparagine 238, and asparagine 441. Residues 488–508 (IIIGVTGAVCVVAVASLFYFR) form a helical membrane-spanning segment. The Cytoplasmic portion of the chain corresponds to 509–563 (KKAQDDKYDKMDQAEAYGKTANTRKDEMLDPEASFWGEDKRASHTTPVLMEKPYY).

It belongs to the apicomplexan parasites AMA1 family.

Its subcellular location is the membrane. Functionally, merozoite receptor PK66 is a surface antigen involved in parasite invasion of erythrocytes. The sequence is that of Merozoite receptor PK66 (PK66) from Plasmodium knowlesi (strain nuri).